The primary structure comprises 122 residues: MIQQETRLKVADNSGAREVLTIKVLGGSGRKTANIGDVIVCTVKQATPGGVVKKGEVVKAVIVRTKSGARRSDGSYISFDENACVIIRDDKSPRGTRIFGPVARELRENNFMKIVSLAPEVI.

This sequence belongs to the universal ribosomal protein uL14 family. Part of the 50S ribosomal subunit. Forms a cluster with proteins L3 and L19. In the 70S ribosome, L14 and L19 interact and together make contacts with the 16S rRNA in bridges B5 and B8.

In terms of biological role, binds to 23S rRNA. Forms part of two intersubunit bridges in the 70S ribosome. The sequence is that of Large ribosomal subunit protein uL14 from Bacillus subtilis (strain 168).